A 240-amino-acid chain; its full sequence is Methylthioribulose-1-phosphate dehydratase (240 aa).

Cys-99 serves as a coordination point for substrate. Zn(2+) contacts are provided by His-116 and His-118. The Proton donor/acceptor role is filled by Glu-145. A Zn(2+)-binding site is contributed by His-201.

It belongs to the aldolase class II family. MtnB subfamily. Requires Zn(2+) as cofactor.

The protein localises to the cytoplasm. It carries out the reaction 5-(methylsulfanyl)-D-ribulose 1-phosphate = 5-methylsulfanyl-2,3-dioxopentyl phosphate + H2O. It functions in the pathway amino-acid biosynthesis; L-methionine biosynthesis via salvage pathway; L-methionine from S-methyl-5-thio-alpha-D-ribose 1-phosphate: step 2/6. In terms of biological role, catalyzes the dehydration of methylthioribulose-1-phosphate (MTRu-1-P) into 2,3-diketo-5-methylthiopentyl-1-phosphate (DK-MTP-1-P). The chain is Methylthioribulose-1-phosphate dehydratase from Paracoccidioides brasiliensis (strain Pb03).